A 212-amino-acid polypeptide reads, in one-letter code: Golgi-associated RAB2 interactor protein 5A (212 aa).

Disordered regions lie at residues 1 to 21 and 162 to 212; these read MKGG…LAPA and PFTH…LWGL. Over residues 169–185 the composition is skewed to acidic residues; it reads APEEEEEEEEEEEEEEV.

Belongs to the GARIN family. Interacts (via N-terminus) with RAB2B (in GTP-bound form). Expressed in testis (at protein level).

It localises to the golgi apparatus. RAB2B effector protein which promotes cytosolic DNA-induced innate immune responses. Regulates IFN responses against DNA viruses by regulating the CGAS-STING signaling axis. The chain is Golgi-associated RAB2 interactor protein 5A from Mus musculus (Mouse).